An 89-amino-acid chain; its full sequence is Small ribosomal subunit protein uS15 (89 aa).

Belongs to the universal ribosomal protein uS15 family. In terms of assembly, part of the 30S ribosomal subunit. Forms a bridge to the 50S subunit in the 70S ribosome, contacting the 23S rRNA.

Its function is as follows. One of the primary rRNA binding proteins, it binds directly to 16S rRNA where it helps nucleate assembly of the platform of the 30S subunit by binding and bridging several RNA helices of the 16S rRNA. Functionally, forms an intersubunit bridge (bridge B4) with the 23S rRNA of the 50S subunit in the ribosome. The polypeptide is Small ribosomal subunit protein uS15 (Shewanella baltica (strain OS185)).